Reading from the N-terminus, the 555-residue chain is F-box only protein 33 (555 aa).

The F-box domain maps to 65–111 (AAGAASLPSELIVHIFSFLPAPDRLRASASCSHWRECLFYPALWPQL).

In terms of assembly, part of the SCF (SKP1-CUL1-F-box) E3 ubiquitin-protein ligase complex SCF(FBXO33) formed of CUL1, SKP1, RBX1 and FBXO33. Interacts via its N-terminus with YBX1 CSD domain. Directly interacts with SKP1 and CUL1.

It participates in protein modification; protein ubiquitination. In terms of biological role, substrate recognition component of a SCF (SKP1-CUL1-F-box protein) E3 ubiquitin-protein ligase complex which mediates the ubiquitination and subsequent proteasomal degradation of target proteins. Probably recognizes and binds to phosphorylated target proteins. Recognizes YBX1. The polypeptide is F-box only protein 33 (FBXO33) (Homo sapiens (Human)).